A 236-amino-acid polypeptide reads, in one-letter code: HTH-type transcriptional regulator SACE_5812 (236 aa).

Positions 30-90 (LLTQDKIVSA…LALDAVFGEV (61 aa)) constitute an HTH tetR-type domain. A DNA-binding region (H-T-H motif) is located at residues 53–72 (SMRKLADRLQAHATSLYWHV).

Its function is as follows. Transcriptional regulator that inhibits erythromycin production. Directly represses the expression of SACE_5813, eryAI (encoding polyketide synthase I) and ermE (encoding rRNA methyltransferase), suggesting its direct regulation of the erythromycin biosynthesis gene cluster. May play an important role in regulating secondary metabolism in actinomycetes. The sequence is that of HTH-type transcriptional regulator SACE_5812 from Saccharopolyspora erythraea (strain ATCC 11635 / DSM 40517 / JCM 4748 / NBRC 13426 / NCIMB 8594 / NRRL 2338).